The following is a 248-amino-acid chain: Ribonuclease PH (248 aa).

Phosphate is bound by residues Arg93 and 131–133 (GTR).

The protein belongs to the RNase PH family. In terms of assembly, homohexameric ring arranged as a trimer of dimers.

It carries out the reaction tRNA(n+1) + phosphate = tRNA(n) + a ribonucleoside 5'-diphosphate. Phosphorolytic 3'-5' exoribonuclease that plays an important role in tRNA 3'-end maturation. Removes nucleotide residues following the 3'-CCA terminus of tRNAs; can also add nucleotides to the ends of RNA molecules by using nucleoside diphosphates as substrates, but this may not be physiologically important. Probably plays a role in initiation of 16S rRNA degradation (leading to ribosome degradation) during starvation. The polypeptide is Ribonuclease PH (Bifidobacterium longum (strain NCC 2705)).